Reading from the N-terminus, the 154-residue chain is Low molecular weight protein-tyrosine-phosphatase PtpA (154 aa).

The active-site Nucleophile is the C8. R14 is a catalytic residue. D120 serves as the catalytic Proton donor.

Belongs to the low molecular weight phosphotyrosine protein phosphatase family. In terms of assembly, interacts with host CORO1A. In terms of processing, phosphorylations at Tyr-122 and Tyr-123 are essential for phosphatase activity.

Its subcellular location is the secreted. The catalysed reaction is O-phospho-L-tyrosyl-[protein] + H2O = L-tyrosyl-[protein] + phosphate. Secreted tyrosine phosphatase that plays a critical role during infection as a bacterial effector protein that counteracts host defenses. Required for intramacrophage survival. This chain is Low molecular weight protein-tyrosine-phosphatase PtpA (ptpA), found in Staphylococcus aureus (strain MSSA476).